The following is a 142-amino-acid chain: ATP synthase epsilon chain (142 aa).

It belongs to the ATPase epsilon chain family. In terms of assembly, F-type ATPases have 2 components, CF(1) - the catalytic core - and CF(0) - the membrane proton channel. CF(1) has five subunits: alpha(3), beta(3), gamma(1), delta(1), epsilon(1). CF(0) has three main subunits: a, b and c.

The protein resides in the cell inner membrane. Produces ATP from ADP in the presence of a proton gradient across the membrane. The protein is ATP synthase epsilon chain of Shewanella frigidimarina (strain NCIMB 400).